The primary structure comprises 100 residues: MAKKSMIEREKKRQKLVNKYAVKRKELKEQIKTSVSFEERFKLQLELQKLPRNSSPTRLHNRCSVTGRPKGYYRDFGLSRHVLREMAHECLLPGVTKSSW.

It belongs to the universal ribosomal protein uS14 family. In terms of assembly, part of the 30S ribosomal subunit.

It is found in the plastid. Its subcellular location is the chloroplast. In terms of biological role, binds 16S rRNA, required for the assembly of 30S particles. The sequence is that of Small ribosomal subunit protein uS14c from Mesostigma viride (Green alga).